The chain runs to 63 residues: Synergistic-type venom protein C9S3, chain 1 (63 aa).

Disulfide bonds link Cys-3/Cys-24, Cys-17/Cys-42, and Cys-46/Cys-57.

It belongs to the three-finger toxin family. Short-chain subfamily. Aminergic toxin sub-subfamily. In terms of assembly, heterodimer of C9S3 chain 1 and chain 2 (AC P01409); disulfide-linked. Expressed by the venom gland.

The protein localises to the secreted. In terms of biological role, this protein shows a synergetic toxic effect in that it enhances the toxicity of other toxins. The protein is Synergistic-type venom protein C9S3, chain 1 of Dendroaspis angusticeps (Eastern green mamba).